A 100-amino-acid polypeptide reads, in one-letter code: MAKKSMIARDVKRKKMAERYAAKRAALMAAFNAADDPMDRLEIHRKIQALPRNSAPSRIRNRCWATGKPRGYYRDFGLCRNQLRERAHKGELPGVVKSSW.

This sequence belongs to the universal ribosomal protein uS14 family. As to quaternary structure, part of the 30S ribosomal subunit. Contacts proteins S3 and S10.

Functionally, binds 16S rRNA, required for the assembly of 30S particles and may also be responsible for determining the conformation of the 16S rRNA at the A site. This is Small ribosomal subunit protein uS14 from Parasynechococcus marenigrum (strain WH8102).